A 363-amino-acid chain; its full sequence is Cytochrome b (363 aa).

The next 4 helical transmembrane spans lie at 23-43 (VGFILGILLILQILSGLLLTF), 67-89 (WFVRLYHSVGVSFYFFFMFIHII), 102-122 (SWYSGIVILILSIVIAFTGYV), and 164-184 (FFILHFVLPAVVLVIVLLHLY). Heme b is bound by residues H73 and H87. H168 and H182 together coordinate heme b. H187 contributes to the a ubiquinone binding site. 4 consecutive transmembrane segments (helical) span residues 210 to 230 (ILFSDVKFLVIISMFIGPQVG), 271 to 291 (VFPTKVSGLVAMVVVLKLLII), 309 to 329 (RVWTTTSVPLVPALFLLGCIG), and 332 to 352 (VINLDLIIIGIYGVLLSTTFV).

This sequence belongs to the cytochrome b family. As to quaternary structure, the main subunits of complex b-c1 are: cytochrome b, cytochrome c1 and the Rieske protein. Requires heme b as cofactor.

It is found in the mitochondrion inner membrane. Component of the ubiquinol-cytochrome c reductase complex (complex III or cytochrome b-c1 complex) that is part of the mitochondrial respiratory chain. The b-c1 complex mediates electron transfer from ubiquinol to cytochrome c. Contributes to the generation of a proton gradient across the mitochondrial membrane that is then used for ATP synthesis. This Theileria parva (East coast fever infection agent) protein is Cytochrome b (MT-CYB).